We begin with the raw amino-acid sequence, 508 residues long: DNA-directed RNA polymerase subunit Rpo1C (508 aa).

Positions 1-123 are unknown; it reads MASLLWRDTS…EIKEKYGENL (123 aa). Positions 124–508 are DNA-directed RNA polymerase subunit Rpo1C; the sequence is SEDVQKVLDD…IYKGYPKTKK (385 aa).

It belongs to the RNA polymerase beta' chain family. As to quaternary structure, part of the RNA polymerase complex.

Its subcellular location is the cytoplasm. It carries out the reaction RNA(n) + a ribonucleoside 5'-triphosphate = RNA(n+1) + diphosphate. DNA-dependent RNA polymerase (RNAP) catalyzes the transcription of DNA into RNA using the four ribonucleoside triphosphates as substrates. Forms part of the jaw domain. This chain is DNA-directed RNA polymerase subunit Rpo1C, found in Thermoplasma acidophilum (strain ATCC 25905 / DSM 1728 / JCM 9062 / NBRC 15155 / AMRC-C165).